Reading from the N-terminus, the 117-residue chain is Large ribosomal subunit protein uL18 (117 aa).

Belongs to the universal ribosomal protein uL18 family. Part of the 50S ribosomal subunit; part of the 5S rRNA/L5/L18/L25 subcomplex. Contacts the 5S and 23S rRNAs.

This is one of the proteins that bind and probably mediate the attachment of the 5S RNA into the large ribosomal subunit, where it forms part of the central protuberance. The chain is Large ribosomal subunit protein uL18 from Klebsiella pneumoniae subsp. pneumoniae (strain ATCC 700721 / MGH 78578).